Here is a 977-residue protein sequence, read N- to C-terminus: Bifunctional glutamine synthetase adenylyltransferase/adenylyl-removing enzyme (977 aa).

The tract at residues 1–457 (MRLPLPSDLP…HFRQVIADPD (457 aa)) is adenylyl removase. Residues 468–977 (GGEWSPLWEQ…RRIWGELGLS (510 aa)) form an adenylyl transferase region.

Belongs to the GlnE family. Requires Mg(2+) as cofactor.

It carries out the reaction [glutamine synthetase]-O(4)-(5'-adenylyl)-L-tyrosine + phosphate = [glutamine synthetase]-L-tyrosine + ADP. The catalysed reaction is [glutamine synthetase]-L-tyrosine + ATP = [glutamine synthetase]-O(4)-(5'-adenylyl)-L-tyrosine + diphosphate. Its function is as follows. Involved in the regulation of glutamine synthetase GlnA, a key enzyme in the process to assimilate ammonia. When cellular nitrogen levels are high, the C-terminal adenylyl transferase (AT) inactivates GlnA by covalent transfer of an adenylyl group from ATP to specific tyrosine residue of GlnA, thus reducing its activity. Conversely, when nitrogen levels are low, the N-terminal adenylyl removase (AR) activates GlnA by removing the adenylyl group by phosphorolysis, increasing its activity. The regulatory region of GlnE binds the signal transduction protein PII (GlnB) which indicates the nitrogen status of the cell. The protein is Bifunctional glutamine synthetase adenylyltransferase/adenylyl-removing enzyme of Pseudomonas putida (strain ATCC 47054 / DSM 6125 / CFBP 8728 / NCIMB 11950 / KT2440).